Here is a 160-residue protein sequence, read N- to C-terminus: Eukaryotic translation initiation factor 5A (160 aa).

Over residues 1-10 (MSDDDHHFES) the composition is skewed to basic and acidic residues. A disordered region spans residues 1–23 (MSDDDHHFESSADAGASKTYPQQ). Lys52 is subject to Hypusine.

The protein belongs to the eIF-5A family. Lys-52 undergoes hypusination, a unique post-translational modification that consists in the addition of a butylamino group from spermidine to lysine side chain, leading to the formation of the unusual amino acid hypusine. eIF-5As are the only known proteins to undergo this modification, which is essential for their function.

Its function is as follows. Translation factor that promotes translation elongation and termination, particularly upon ribosome stalling at specific amino acid sequence contexts. Binds between the exit (E) and peptidyl (P) site of the ribosome and promotes rescue of stalled ribosome: specifically required for efficient translation of polyproline-containing peptides as well as other motifs that stall the ribosome. Acts as a ribosome quality control (RQC) cofactor by joining the RQC complex to facilitate peptidyl transfer during CAT tailing step. The polypeptide is Eukaryotic translation initiation factor 5A (Dianthus caryophyllus (Carnation)).